A 629-amino-acid polypeptide reads, in one-letter code: Iron multicopper oxidase fer1 (629 aa).

The signal sequence occupies residues 1–29; that stretch reads MVAPQRRTVMPALGLLASSLCSLLLTANA. Plastocyanin-like domains follow at residues 44–164 and 175–338; these read VNPD…IHPD and DDYT…TISY. N-linked (GlcNAc...) asparagine glycans are attached at residues Asn-58 and Asn-69. Cu cation-binding residues include His-91 and His-93. The N-linked (GlcNAc...) asparagine glycan is linked to Asn-98. 2 residues coordinate Cu cation: His-144 and His-146. Asn-188, Asn-222, Asn-236, Asn-253, Asn-303, Asn-331, and Asn-398 each carry an N-linked (GlcNAc...) asparagine glycan. The 137-residue stretch at 401–537 folds into the Plastocyanin-like 3 domain; that stretch reads YVAPQVPALF…LASIFIEAPD (137 aa). Positions 452, 455, and 457 each coordinate Cu cation. Residue Asn-482 is glycosylated (N-linked (GlcNAc...) asparagine). Residues His-517, Cys-518, His-519, and His-523 each coordinate Cu cation. The N-linked (GlcNAc...) asparagine glycan is linked to Asn-569. Residues 592-612 form a helical membrane-spanning segment; the sequence is AIAAFTGCIITGLLGLATVVV.

Belongs to the multicopper oxidase family. Cu cation serves as cofactor.

The protein resides in the cell membrane. Functionally, iron transport multicopper oxidase, which is required for Fe(2+) high affinity uptake. May be required to oxidize Fe(2+) and release it from the transporter. Essential component of copper-dependent iron transport. The protein is Iron multicopper oxidase fer1 of Mycosarcoma maydis (Corn smut fungus).